Here is a 205-residue protein sequence, read N- to C-terminus: Probable GTP-binding protein EngB (205 aa).

An EngB-type G domain is found at 29 to 203 (QGAEIAFIGR…KAVLSQWFRS (175 aa)). GTP contacts are provided by residues 37-44 (GRSNAGKS), 64-68 (GRTQM), 82-85 (DLPG), 149-152 (TKSD), and 182-184 (FSS). 2 residues coordinate Mg(2+): Ser-44 and Thr-66.

This sequence belongs to the TRAFAC class TrmE-Era-EngA-EngB-Septin-like GTPase superfamily. EngB GTPase family. The cofactor is Mg(2+).

In terms of biological role, necessary for normal cell division and for the maintenance of normal septation. The sequence is that of Probable GTP-binding protein EngB from Coxiella burnetii (strain CbuG_Q212) (Coxiella burnetii (strain Q212)).